The chain runs to 255 residues: MSKAFLPTILEQKGKEVSQLVMEDLQPLRQTYRLYDFLKSNQNKLQIISEVKKASPSMGDINLDVDIVAQAKTYEENGAAMISVLTDEVFFKGDISYLKEISTQVAIPTLAKDFIIDEKQIVRSRNAGATVILLIVAALPEARLKELYDFATSLGLEVLVETHNLPELEVAHRIGAEIIGVNNRNLVTFETDINTSLELSTHFKDKPVYISESAIFTGQDAALVAPYFNGILVGTALMTADNVAKKVKELQIDKG.

The protein belongs to the TrpC family.

The catalysed reaction is 1-(2-carboxyphenylamino)-1-deoxy-D-ribulose 5-phosphate + H(+) = (1S,2R)-1-C-(indol-3-yl)glycerol 3-phosphate + CO2 + H2O. It functions in the pathway amino-acid biosynthesis; L-tryptophan biosynthesis; L-tryptophan from chorismate: step 4/5. The polypeptide is Indole-3-glycerol phosphate synthase (Streptococcus thermophilus (strain ATCC BAA-250 / LMG 18311)).